We begin with the raw amino-acid sequence, 91 residues long: Small ribosomal subunit protein bS20 (91 aa).

Positions 1–26 are disordered; sequence MANLKSSKKDIRRTARRKERNGEDRT.

It belongs to the bacterial ribosomal protein bS20 family.

Its function is as follows. Binds directly to 16S ribosomal RNA. This is Small ribosomal subunit protein bS20 from Leptospira biflexa serovar Patoc (strain Patoc 1 / Ames).